Consider the following 122-residue polypeptide: Large ribosomal subunit protein bL12 (122 aa).

It belongs to the bacterial ribosomal protein bL12 family. Homodimer. Part of the ribosomal stalk of the 50S ribosomal subunit. Forms a multimeric L10(L12)X complex, where L10 forms an elongated spine to which 2 to 4 L12 dimers bind in a sequential fashion. Binds GTP-bound translation factors.

Its function is as follows. Forms part of the ribosomal stalk which helps the ribosome interact with GTP-bound translation factors. Is thus essential for accurate translation. The protein is Large ribosomal subunit protein bL12 of Enterococcus faecalis (strain ATCC 700802 / V583).